A 299-amino-acid chain; its full sequence is ATP phosphoribosyltransferase (299 aa).

It belongs to the ATP phosphoribosyltransferase family. Long subfamily. In terms of assembly, equilibrium between an active dimeric form, an inactive hexameric form and higher aggregates. Interconversion between the various forms is largely reversible and is influenced by the natural substrates and inhibitors of the enzyme. It depends on Mg(2+) as a cofactor.

It localises to the cytoplasm. It carries out the reaction 1-(5-phospho-beta-D-ribosyl)-ATP + diphosphate = 5-phospho-alpha-D-ribose 1-diphosphate + ATP. Its pathway is amino-acid biosynthesis; L-histidine biosynthesis; L-histidine from 5-phospho-alpha-D-ribose 1-diphosphate: step 1/9. Its activity is regulated as follows. Feedback inhibited by histidine. Catalyzes the condensation of ATP and 5-phosphoribose 1-diphosphate to form N'-(5'-phosphoribosyl)-ATP (PR-ATP). Has a crucial role in the pathway because the rate of histidine biosynthesis seems to be controlled primarily by regulation of HisG enzymatic activity. In Escherichia coli O17:K52:H18 (strain UMN026 / ExPEC), this protein is ATP phosphoribosyltransferase.